The sequence spans 206 residues: Peptidyl-tRNA hydrolase (206 aa).

Tyrosine 19 serves as a coordination point for tRNA. Histidine 24 (proton acceptor) is an active-site residue. The tRNA site is built by tyrosine 70, asparagine 72, and asparagine 118.

This sequence belongs to the PTH family. Monomer.

It is found in the cytoplasm. It carries out the reaction an N-acyl-L-alpha-aminoacyl-tRNA + H2O = an N-acyl-L-amino acid + a tRNA + H(+). Functionally, hydrolyzes ribosome-free peptidyl-tRNAs (with 1 or more amino acids incorporated), which drop off the ribosome during protein synthesis, or as a result of ribosome stalling. Its function is as follows. Catalyzes the release of premature peptidyl moieties from peptidyl-tRNA molecules trapped in stalled 50S ribosomal subunits, and thus maintains levels of free tRNAs and 50S ribosomes. The protein is Peptidyl-tRNA hydrolase of Prochlorococcus marinus (strain MIT 9313).